The following is a 546-amino-acid chain: Chaperonin GroEL 2 (546 aa).

ATP-binding positions include 30–33, Lys-51, 87–91, Gly-415, and Asp-495; these read TLGP and DGTTT.

It belongs to the chaperonin (HSP60) family. As to quaternary structure, forms a cylinder of 14 subunits composed of two heptameric rings stacked back-to-back. Interacts with the co-chaperonin GroES.

The protein resides in the cytoplasm. The enzyme catalyses ATP + H2O + a folded polypeptide = ADP + phosphate + an unfolded polypeptide.. In terms of biological role, together with its co-chaperonin GroES, plays an essential role in assisting protein folding. The GroEL-GroES system forms a nano-cage that allows encapsulation of the non-native substrate proteins and provides a physical environment optimized to promote and accelerate protein folding. The sequence is that of Chaperonin GroEL 2 from Burkholderia cenocepacia (strain HI2424).